The sequence spans 302 residues: Glycine--tRNA ligase alpha subunit (302 aa).

The protein belongs to the class-II aminoacyl-tRNA synthetase family. As to quaternary structure, tetramer of two alpha and two beta subunits.

The protein resides in the cytoplasm. The catalysed reaction is tRNA(Gly) + glycine + ATP = glycyl-tRNA(Gly) + AMP + diphosphate. The sequence is that of Glycine--tRNA ligase alpha subunit from Enterococcus faecalis (strain ATCC 700802 / V583).